A 671-amino-acid chain; its full sequence is tRNA 5-methylaminomethyl-2-thiouridine biosynthesis bifunctional protein MnmC (671 aa).

Residues 1–245 (MVNVMNTLSF…KREMLWGEKP (245 aa)) form a tRNA (mnm(5)s(2)U34)-methyltransferase region. Positions 272 to 671 (VGGGVASLFV…RKLLKGSKVE (400 aa)) are FAD-dependent cmnm(5)s(2)U34 oxidoreductase.

This sequence in the N-terminal section; belongs to the methyltransferase superfamily. tRNA (mnm(5)s(2)U34)-methyltransferase family. It in the C-terminal section; belongs to the DAO family. It depends on FAD as a cofactor.

It is found in the cytoplasm. It catalyses the reaction 5-aminomethyl-2-thiouridine(34) in tRNA + S-adenosyl-L-methionine = 5-methylaminomethyl-2-thiouridine(34) in tRNA + S-adenosyl-L-homocysteine + H(+). In terms of biological role, catalyzes the last two steps in the biosynthesis of 5-methylaminomethyl-2-thiouridine (mnm(5)s(2)U) at the wobble position (U34) in tRNA. Catalyzes the FAD-dependent demodification of cmnm(5)s(2)U34 to nm(5)s(2)U34, followed by the transfer of a methyl group from S-adenosyl-L-methionine to nm(5)s(2)U34, to form mnm(5)s(2)U34. The protein is tRNA 5-methylaminomethyl-2-thiouridine biosynthesis bifunctional protein MnmC of Actinobacillus pleuropneumoniae serotype 5b (strain L20).